Here is a 254-residue protein sequence, read N- to C-terminus: Imidazole glycerol phosphate synthase subunit HisF (254 aa).

Residues Asp-11 and Asp-130 contribute to the active site.

This sequence belongs to the HisA/HisF family. Heterodimer of HisH and HisF.

The protein localises to the cytoplasm. It catalyses the reaction 5-[(5-phospho-1-deoxy-D-ribulos-1-ylimino)methylamino]-1-(5-phospho-beta-D-ribosyl)imidazole-4-carboxamide + L-glutamine = D-erythro-1-(imidazol-4-yl)glycerol 3-phosphate + 5-amino-1-(5-phospho-beta-D-ribosyl)imidazole-4-carboxamide + L-glutamate + H(+). Its pathway is amino-acid biosynthesis; L-histidine biosynthesis; L-histidine from 5-phospho-alpha-D-ribose 1-diphosphate: step 5/9. Functionally, IGPS catalyzes the conversion of PRFAR and glutamine to IGP, AICAR and glutamate. The HisF subunit catalyzes the cyclization activity that produces IGP and AICAR from PRFAR using the ammonia provided by the HisH subunit. The protein is Imidazole glycerol phosphate synthase subunit HisF of Laribacter hongkongensis (strain HLHK9).